The following is a 507-amino-acid chain: Sulfatase (507 aa).

The N-terminal stretch at 1 to 18 (MKTRYFLLLGICMLSCRT) is a signal peptide. The Ca(2+) site is built by Asp-39, Asp-40, and Cys-79. Cys-79 (nucleophile) is an active-site residue. Cys-79 bears the 3-oxoalanine (Cys) mark. The active site involves His-139. Residues Asp-325 and His-326 each coordinate Ca(2+).

Belongs to the sulfatase family. It depends on Ca(2+) as a cofactor. Post-translationally, the conversion to 3-oxoalanine (also known as C-formylglycine, FGly), of a serine or cysteine residue in prokaryotes and of a cysteine residue in eukaryotes, is critical for catalytic activity. This post-translational modification is severely defective in multiple sulfatase deficiency (MSD).

It is found in the periplasm. Functionally, sulfatase that may be involved in ulvan degradation. Ulvan is the main polysaccharide component of the Ulvales (green seaweed) cell wall. It is composed of disaccharide building blocks comprising 3-sulfated rhamnose (Rha3S) linked to D-glucuronic acid (GlcA), L-iduronic acid (IduA), or D-xylose (Xyl). Has no activity on different ulvan polymers. The protein is Sulfatase of Formosa agariphila (strain DSM 15362 / KCTC 12365 / LMG 23005 / KMM 3901 / M-2Alg 35-1).